The chain runs to 347 residues: 3-isopropylmalate dehydrogenase (347 aa).

Residues arginine 87, arginine 97, arginine 121, and aspartate 212 each coordinate substrate. 3 residues coordinate Mg(2+): aspartate 212, aspartate 236, and aspartate 240. Position 272–284 (272–284 (GSAPDIAGQGTAD)) interacts with NAD(+).

The protein belongs to the isocitrate and isopropylmalate dehydrogenases family. LeuB type 2 subfamily. In terms of assembly, homodimer. Mg(2+) is required as a cofactor. Mn(2+) serves as cofactor.

The protein resides in the cytoplasm. The catalysed reaction is (2R,3S)-3-isopropylmalate + NAD(+) = 4-methyl-2-oxopentanoate + CO2 + NADH. It participates in amino-acid biosynthesis; L-leucine biosynthesis; L-leucine from 3-methyl-2-oxobutanoate: step 3/4. Its function is as follows. Catalyzes the oxidation of 3-carboxy-2-hydroxy-4-methylpentanoate (3-isopropylmalate) to 3-carboxy-4-methyl-2-oxopentanoate. The product decarboxylates to 4-methyl-2 oxopentanoate. This chain is 3-isopropylmalate dehydrogenase, found in Saccharopolyspora erythraea (strain ATCC 11635 / DSM 40517 / JCM 4748 / NBRC 13426 / NCIMB 8594 / NRRL 2338).